The sequence spans 514 residues: MATLAMSTPSSPTWPKRRPKAWAMRCERYCCAAASYFPLAFVYSLTTWAVYVEASVGLKPSSSSWIGLPSSILGVVLYLALNISYTTAVFTDPGSPLGARSGGGHPYSALPITELPEYTSYTVNSTGGSRFCKKCQCPKPDRAHHCSTCKRCVLKMDHHCPWLATCVGLRNYKAFLLFLIYTSLFCWVDFGVSAIWIWTEVFNDTRYMDGILPVNVVLLSILGGIIGLVLTGFTAWHISLATRGLTTIECLEKTRYVSPLRKALDRHRYDGLLGTNTGGENQDTFGSRLQNYGNQILDAHANAIPGVTRPEEGEESSDNLTPAQQALSRSYADLERQREHDRYEDYLAELDNEKMPHAFDLGWKRNLLHLFGDRPLHWLVPTPTTTGNGWEWEPSRKFLEAQERVRQQREQVAEQQRQHQRDLYLRNMNNSRAWLGNELPPGWTPDQPLSHSDDVARPATGVSMKTLAPRSPRPRPGEEVYAEDLDKDDFVLEPTRGKGSGNQSSREDDWRDWD.

At 1–31 (MATLAMSTPSSPTWPKRRPKAWAMRCERYCC) the chain is on the cytoplasmic side. Residues 32-52 (AAASYFPLAFVYSLTTWAVYV) traverse the membrane as a helical segment. At 53–64 (EASVGLKPSSSS) the chain is on the lumenal side. Residues 65–85 (WIGLPSSILGVVLYLALNISY) form a helical membrane-spanning segment. The Cytoplasmic segment spans residues 86 to 174 (TTAVFTDPGS…TCVGLRNYKA (89 aa)). One can recognise a DHHC domain in the interval 130–180 (RFCKKCQCPKPDRAHHCSTCKRCVLKMDHHCPWLATCVGLRNYKAFLLFLI). A helical transmembrane segment spans residues 175-195 (FLLFLIYTSLFCWVDFGVSAI). At 196–209 (WIWTEVFNDTRYMD) the chain is on the lumenal side. A helical transmembrane segment spans residues 210–230 (GILPVNVVLLSILGGIIGLVL). Over 231-514 (TGFTAWHISL…SREDDWRDWD (284 aa)) the chain is Cytoplasmic. Disordered regions lie at residues 307–336 (VTRP…DLER) and 436–514 (GNEL…RDWD). The segment covering 318 to 328 (DNLTPAQQALS) has biased composition (polar residues). Positions 505–514 (SREDDWRDWD) are enriched in basic and acidic residues.

This sequence belongs to the DHHC palmitoyltransferase family. PFA3 subfamily. Post-translationally, autopalmitoylated.

The protein localises to the vacuole membrane. It catalyses the reaction L-cysteinyl-[protein] + hexadecanoyl-CoA = S-hexadecanoyl-L-cysteinyl-[protein] + CoA. In terms of biological role, palmitoyltransferase specific for VAC8. Palmitoylates VAC8 at one or more of its N-terminal cysteine residues, which is required for its proper membrane localization. In Emericella nidulans (strain FGSC A4 / ATCC 38163 / CBS 112.46 / NRRL 194 / M139) (Aspergillus nidulans), this protein is Palmitoyltransferase pfa3 (pfa3).